A 686-amino-acid chain; its full sequence is UvrABC system protein C (686 aa).

Over residues 1–14 (MVHDSTDDPDDTRV) the composition is skewed to basic and acidic residues. The tract at residues 1–48 (MVHDSTDDPDDTRVRKSRRGTALDAPPQETAPPDLDPATTGGDDEDDA) is disordered. The GIY-YIG domain maps to 81-160 (TSPGVYRMLN…IKQLRPRFNV (80 aa)). The 36-residue stretch at 270-305 (HAVKQELAGEMEKAANELEFETAALYRDRLAALSAI) folds into the UVR domain.

Belongs to the UvrC family. Interacts with UvrB in an incision complex.

The protein resides in the cytoplasm. Its function is as follows. The UvrABC repair system catalyzes the recognition and processing of DNA lesions. UvrC both incises the 5' and 3' sides of the lesion. The N-terminal half is responsible for the 3' incision and the C-terminal half is responsible for the 5' incision. This chain is UvrABC system protein C, found in Bradyrhizobium diazoefficiens (strain JCM 10833 / BCRC 13528 / IAM 13628 / NBRC 14792 / USDA 110).